Here is a 458-residue protein sequence, read N- to C-terminus: tRNA modification GTPase MnmE (458 aa).

Residues Arg-22, Glu-84, and Arg-123 each contribute to the (6S)-5-formyl-5,6,7,8-tetrahydrofolate site. The TrmE-type G domain occupies 220–379 (GIATAIIGRP…LEKAIADLFF (160 aa)). Asn-230 is a binding site for K(+). Residues 230-235 (NVGKSS), 249-255 (TDIAGTT), and 274-277 (DTAG) contribute to the GTP site. Ser-234 provides a ligand contact to Mg(2+). Positions 249, 251, and 254 each coordinate K(+). A Mg(2+)-binding site is contributed by Thr-255. Lys-458 contributes to the (6S)-5-formyl-5,6,7,8-tetrahydrofolate binding site.

It belongs to the TRAFAC class TrmE-Era-EngA-EngB-Septin-like GTPase superfamily. TrmE GTPase family. Homodimer. Heterotetramer of two MnmE and two MnmG subunits. The cofactor is K(+).

The protein localises to the cytoplasm. Exhibits a very high intrinsic GTPase hydrolysis rate. Involved in the addition of a carboxymethylaminomethyl (cmnm) group at the wobble position (U34) of certain tRNAs, forming tRNA-cmnm(5)s(2)U34. The chain is tRNA modification GTPase MnmE from Bacillus cereus (strain ATCC 14579 / DSM 31 / CCUG 7414 / JCM 2152 / NBRC 15305 / NCIMB 9373 / NCTC 2599 / NRRL B-3711).